The sequence spans 620 residues: Methionine--tRNA ligase (620 aa).

The 'HIGH' region motif lies at proline 11–histidine 21. Positions 143, 146, 156, and 159 each coordinate Zn(2+). A 'KMSKS' region motif is present at residues lysine 347–serine 351. Serine 350 serves as a coordination point for ATP.

It belongs to the class-I aminoacyl-tRNA synthetase family. MetG type 1 subfamily. Monomer. Zn(2+) is required as a cofactor.

It localises to the cytoplasm. It carries out the reaction tRNA(Met) + L-methionine + ATP = L-methionyl-tRNA(Met) + AMP + diphosphate. Is required not only for elongation of protein synthesis but also for the initiation of all mRNA translation through initiator tRNA(fMet) aminoacylation. The polypeptide is Methionine--tRNA ligase (Bifidobacterium adolescentis (strain ATCC 15703 / DSM 20083 / NCTC 11814 / E194a)).